The primary structure comprises 175 residues: Ribosome maturation factor RimM (175 aa).

In terms of domain architecture, PRC barrel spans 96 to 172 (PDTYYDHQLE…LIEIDPPDGL (77 aa)).

It belongs to the RimM family. Binds ribosomal protein uS19.

It localises to the cytoplasm. An accessory protein needed during the final step in the assembly of 30S ribosomal subunit, possibly for assembly of the head region. Essential for efficient processing of 16S rRNA. May be needed both before and after RbfA during the maturation of 16S rRNA. It has affinity for free ribosomal 30S subunits but not for 70S ribosomes. In Mycolicibacterium paratuberculosis (strain ATCC BAA-968 / K-10) (Mycobacterium paratuberculosis), this protein is Ribosome maturation factor RimM.